The chain runs to 724 residues: Probable dipeptidyl-peptidase 5 (724 aa).

The first 19 residues, 1-19 (MGALTWLSVVAAAASTALA), serve as a signal peptide directing secretion. N-linked (GlcNAc...) asparagine glycans are attached at residues N76, N97, N154, N257, N383, and N453. S563 acts as the Charge relay system in catalysis. N610 carries N-linked (GlcNAc...) asparagine glycosylation. Residues D646 and H678 each act as charge relay system in the active site.

The protein belongs to the peptidase S9C family.

It is found in the secreted. Extracellular dipeptidyl-peptidase which removes N-terminal dipeptides sequentially from polypeptides having unsubstituted N-termini. This Aspergillus clavatus (strain ATCC 1007 / CBS 513.65 / DSM 816 / NCTC 3887 / NRRL 1 / QM 1276 / 107) protein is Probable dipeptidyl-peptidase 5 (dpp5).